Reading from the N-terminus, the 209-residue chain is RNA chaperone ProQ (209 aa).

Positions Glu-105–Ala-148 are disordered.

This sequence belongs to the ProQ family.

Its subcellular location is the cytoplasm. Its function is as follows. RNA chaperone with significant RNA binding, RNA strand exchange and RNA duplexing activities. The protein is RNA chaperone ProQ of Shewanella baltica (strain OS223).